We begin with the raw amino-acid sequence, 299 residues long: ATP phosphoribosyltransferase (299 aa).

The protein belongs to the ATP phosphoribosyltransferase family. Long subfamily. Requires Mg(2+) as cofactor.

Its subcellular location is the cytoplasm. The enzyme catalyses 1-(5-phospho-beta-D-ribosyl)-ATP + diphosphate = 5-phospho-alpha-D-ribose 1-diphosphate + ATP. It functions in the pathway amino-acid biosynthesis; L-histidine biosynthesis; L-histidine from 5-phospho-alpha-D-ribose 1-diphosphate: step 1/9. Its activity is regulated as follows. Feedback inhibited by histidine. Catalyzes the condensation of ATP and 5-phosphoribose 1-diphosphate to form N'-(5'-phosphoribosyl)-ATP (PR-ATP). Has a crucial role in the pathway because the rate of histidine biosynthesis seems to be controlled primarily by regulation of HisG enzymatic activity. This is ATP phosphoribosyltransferase from Shewanella sediminis (strain HAW-EB3).